Reading from the N-terminus, the 461-residue chain is MSSFTKDEFDCHILDEGFTAKDILDQKINEVSSSDDKDAFYVADLGDILKKHLRWLKALPRVTPFYAVKCNDSRAIVSTLAAIGTGFDCASKTEIQLVQGLGVPAERVIYANPCKQVSQIKYAASNGVQMMTFDSEIELMKVARAHPKAKLVLRIATDDSKAVCRLSVKFGATLKTSRLLLERAKELNIDVIGVSFHVGSGCTDPETFVQAVSDARCVFDMATEVGFSMHLLDIGGGFPGSEDTKLKFEEITSVINPALDKYFPSDSGVRIIAEPGRYYVASAFTLAVNIIAKKTVWKEQPGSDDEDESNEQTFMYYVNDGVYGSFNCILYDHAHVKALLQKRPKPDEKYYSSSIWGPTCDGLDRIVERCNLPEMHVGDWMLFENMGAYTVAAASTFNGFQRPNIYYVMSRPMWQLMKQIQSHGFPPEVEEQDDGTLPMSCAQESGMDRHPAACASARINV.

Lys69 is subject to N6-(pyridoxal phosphate)lysine. Residues Ser200, Gly237, and 274–277 (EPGR) contribute to the pyridoxal 5'-phosphate site. Ser303 is modified (phosphoserine; by CK2). 331–332 (YD) serves as a coordination point for substrate. Catalysis depends on Cys360, which acts as the Proton donor; shared with dimeric partner. Residue Cys360 is modified to S-nitrosocysteine. Residue Asp361 coordinates substrate. Tyr389 contributes to the pyridoxal 5'-phosphate binding site.

This sequence belongs to the Orn/Lys/Arg decarboxylase class-II family. Homodimer. Only the dimer is catalytically active, as the active sites are constructed of residues from both monomers. Does not form a heterodimer with AZIN2. Pyridoxal 5'-phosphate serves as cofactor. Expressed during testis development in the outer part of the seminiferous tubules.

The catalysed reaction is L-ornithine + H(+) = putrescine + CO2. Its pathway is amine and polyamine biosynthesis; putrescine biosynthesis via L-ornithine pathway; putrescine from L-ornithine: step 1/1. Inhibited by antizymes (AZs) OAZ1, OAZ2 and OAZ3 in response to polyamine levels. AZs inhibit the assembly of the functional homodimer by binding to ODC monomers. Additionally, OAZ1 targets ODC monomers for ubiquitin-independent proteolytic destruction by the 26S proteasome. Its function is as follows. Catalyzes the first and rate-limiting step of polyamine biosynthesis that converts ornithine into putrescine, which is the precursor for the polyamines, spermidine and spermine. Polyamines are essential for cell proliferation and are implicated in cellular processes, ranging from DNA replication to apoptosis. The sequence is that of Ornithine decarboxylase (Odc1) from Mus musculus (Mouse).